Here is a 147-residue protein sequence, read N- to C-terminus: Globin, major polymeric component P1 (147 aa).

The Globin domain maps to 2-146 (HLTADQVAAL…ISDACIAGLQ (145 aa)). His-96 contacts heme b.

This sequence belongs to the globin family. In terms of assembly, polymer.

This chain is Globin, major polymeric component P1, found in Glycera dibranchiata (Bloodworm).